We begin with the raw amino-acid sequence, 174 residues long: Calcium-binding protein F (174 aa).

EF-hand domains are found at residues 9–44, 60–83, 92–127, and 133–162; these read KIFQ…KMDG, VDMD…EAKK, AALA…NGHT, and DQVL…RRID. 5 residues coordinate Ca(2+): Asp22, Asn24, Asp26, Ser28, and Asp33. The Ca(2+) site is built by Asp105, Asp107, Asp109, Lys111, Glu116, Asp140, Asp142, Asp144, Cys146, and Glu151.

The chain is Calcium-binding protein F (cbpF) from Dictyostelium discoideum (Social amoeba).